We begin with the raw amino-acid sequence, 268 residues long: Protein DEEPER ROOTING 1 (268 aa).

Residues 11-21 are compositionally biased toward low complexity; it reads LNGKQGNKKPN. Residues 11–39 form a disordered region; sequence LNGKQGNKKPNTVPITTHPAKQEPREEFS. The segment covering 30 to 39 has biased composition (basic and acidic residues); the sequence is AKQEPREEFS. Positions 44–50 match the IGT motif motif; sequence GLLAIGT. A disordered region spans residues 220–246; sequence SRAASMKKYLEDRQIPTKKESNTEDDT. Residues 227–246 are compositionally biased toward basic and acidic residues; that stretch reads KYLEDRQIPTKKESNTEDDT.

It belongs to the LAZY family. In terms of tissue distribution, expressed in roots.

Functionally, involved in the development of the root system architecture by influencing lateral root angles and primary root length. The sequence is that of Protein DEEPER ROOTING 1 from Prunus persica (Peach).